A 228-amino-acid polypeptide reads, in one-letter code: 5'-methylthioadenosine/S-adenosylhomocysteine nucleosidase (228 aa).

Glu11 (proton acceptor) is an active-site residue. Substrate is bound by residues Gly77, Ile151, and 172–173 (ME). Asp196 serves as the catalytic Proton donor.

This sequence belongs to the PNP/UDP phosphorylase family. MtnN subfamily.

The catalysed reaction is S-adenosyl-L-homocysteine + H2O = S-(5-deoxy-D-ribos-5-yl)-L-homocysteine + adenine. It carries out the reaction S-methyl-5'-thioadenosine + H2O = 5-(methylsulfanyl)-D-ribose + adenine. The enzyme catalyses 5'-deoxyadenosine + H2O = 5-deoxy-D-ribose + adenine. It functions in the pathway amino-acid biosynthesis; L-methionine biosynthesis via salvage pathway; S-methyl-5-thio-alpha-D-ribose 1-phosphate from S-methyl-5'-thioadenosine (hydrolase route): step 1/2. In terms of biological role, catalyzes the irreversible cleavage of the glycosidic bond in both 5'-methylthioadenosine (MTA) and S-adenosylhomocysteine (SAH/AdoHcy) to adenine and the corresponding thioribose, 5'-methylthioribose and S-ribosylhomocysteine, respectively. Also cleaves 5'-deoxyadenosine, a toxic by-product of radical S-adenosylmethionine (SAM) enzymes, into 5-deoxyribose and adenine. The chain is 5'-methylthioadenosine/S-adenosylhomocysteine nucleosidase from Staphylococcus aureus (strain JH1).